A 164-amino-acid chain; its full sequence is Choriogonadotropin subunit beta (164 aa).

The first 20 residues, 1–20 (MEMLQGLLLCLLLSTGGAWA), serve as a signal peptide directing secretion. 6 disulfides stabilise this stretch: cysteine 29–cysteine 77, cysteine 43–cysteine 92, cysteine 46–cysteine 130, cysteine 54–cysteine 108, cysteine 58–cysteine 110, and cysteine 113–cysteine 120. A glycan (N-linked (GlcNAc...) asparagine) is linked at asparagine 50. Residues 133–164 (HTSQDSSSKDPPRNLTSPSQLPEPADAPLVPQ) form a disordered region. A glycan (O-linked (GalNAc...) serine) is linked at serine 140. A glycan (N-linked (GlcNAc...) asparagine) is linked at asparagine 146. Residue serine 151 is glycosylated (O-linked (GalNAc...) serine).

This sequence belongs to the glycoprotein hormones subunit beta family. Heterodimer of a common alpha chain and a unique beta chain which confers biological specificity to thyrotropin, lutropin, follitropin and gonadotropin.

It is found in the secreted. In terms of biological role, stimulates the ovaries to synthesize the steroids that are essential for the maintenance of pregnancy. In Aotus nancymaae (Ma's night monkey), this protein is Choriogonadotropin subunit beta (CGB).